The chain runs to 268 residues: Bidirectional sugar transporter N3 (268 aa).

Residues 1-7 (MAISHNT) lie on the Extracellular side of the membrane. Residues 8 to 28 (LAFTFGMLGNVISFLVFLAPI) traverse the membrane as a helical segment. Residues 10 to 96 (FTFGMLGNVI…ILYIIYAPRD (87 aa)) form the MtN3/slv 1 domain. Topologically, residues 29–42 (STFYRIYKKKSTEG) are cytoplasmic. A helical transmembrane segment spans residues 43–63 (FQSLPYLVALFSSMLWLYYAL). Residues 64-70 (LKKDAFL) are Extracellular-facing. A helical membrane pass occupies residues 71 to 91 (LITINSFGCVVETIYIILYII). Residues 92–103 (YAPRDARNLTFK) lie on the Cytoplasmic side of the membrane. The helical transmembrane segment at 104–124 (LLSAMNVGSFALILIVTNYAV) threads the bilayer. Topologically, residues 125-131 (HGPLRVQ) are extracellular. The region spanning 131–214 (QVLGWVCVSL…QMLLYAIYRN (84 aa)) is the MtN3/slv 2 domain. A helical transmembrane segment spans residues 132-152 (VLGWVCVSLSVSVFAAPLSIV). Residues 153 to 165 (AQVVRTKSVEFMP) lie on the Cytoplasmic side of the membrane. The helical transmembrane segment at 166–186 (FNLSFTLTLSATMWFGYGFFL) threads the bilayer. Residues 187–190 (KDIC) are Extracellular-facing. A helical transmembrane segment spans residues 191 to 211 (IXLPNVLGXVLGLLQMLLYAI). Residues 212 to 268 (YRNGGEKAMKKEKKAPIEPPKSIVIETQLEKIEQEKKNKDDDNEEKDKSEEPIGCGV) lie on the Cytoplasmic side of the membrane. Residues 234 to 262 (IVIETQLEKIEQEKKNKDDDNEEKDKSEE) are a coiled coil. The span at 243–262 (IEQEKKNKDDDNEEKDKSEE) shows a compositional bias: basic and acidic residues. Residues 243–268 (IEQEKKNKDDDNEEKDKSEEPIGCGV) are disordered.

It belongs to the SWEET sugar transporter family. Forms homooligomers and/or heterooligomers.

Its subcellular location is the cell membrane. Functionally, mediates both low-affinity uptake and efflux of sugar across the plasma membrane. In Medicago truncatula (Barrel medic), this protein is Bidirectional sugar transporter N3 (N3).